We begin with the raw amino-acid sequence, 791 residues long: Nuclear cap-binding protein subunit 1-B (791 aa).

The segment at 1–24 is disordered; it reads MSRRRHSDENDGGQPHKRRRTSEP. The 213-residue stretch at 28–240 folds into the MIF4G domain; the sequence is EDRLESLICR…CLWAQVQKLK (213 aa). Positions 641–714 form a coiled coil; it reads LHSTIRKMNK…SEQKNLFLVI (74 aa). Residues 664–687 are disordered; it reads QRLAKQHKHRDSDDNDEDSGRKDG.

It belongs to the NCBP1 family. Component of the nuclear cap-binding complex (CBC), a heterodimer composed of ncbp1/cbp80 and ncbp2/cbp20 that interacts with m7GpppG-capped RNA. Component of an alternative nuclear cap-binding complex (CBC) composed of ncbp1/cbp80 and ncbp3.

The protein localises to the nucleus. The protein resides in the cytoplasm. In terms of biological role, component of the cap-binding complex (CBC), which binds cotranscriptionally to the 5'-cap of pre-mRNAs and is involved in various processes such as pre-mRNA splicing, translation regulation, nonsense-mediated mRNA decay, RNA-mediated gene silencing (RNAi) by microRNAs (miRNAs) and mRNA export. The CBC complex is involved in mRNA export from the nucleus, leading to the recruitment of the mRNA export machinery to the 5'-end of mRNA and to mRNA export in a 5' to 3' direction through the nuclear pore. The CBC complex is also involved in mediating U snRNA and intronless mRNAs export from the nucleus. The CBC complex is essential for a pioneer round of mRNA translation, before steady state translation when the CBC complex is replaced by cytoplasmic cap-binding protein eIF4E. The pioneer round of mRNA translation mediated by the CBC complex plays a central role in nonsense-mediated mRNA decay (NMD), NMD only taking place in mRNAs bound to the CBC complex, but not on eIF4E-bound mRNAs. The CBC complex enhances NMD in mRNAs containing at least one exon-junction complex (EJC), promoting the interaction between UPF1 and UPF2. The CBC complex is also involved in 'failsafe' NMD, which is independent of the EJC complex, while it does not participate in Staufen-mediated mRNA decay (SMD). During cell proliferation, the CBC complex is also involved in microRNAs (miRNAs) biogenesis via its interaction with SRRT/ARS2 and is required for miRNA-mediated RNA interference. The CBC complex also acts as a negative regulator of parn, thereby acting as an inhibitor of mRNA deadenylation. In the CBC complex, NCBP1/CBP80 does not bind directly capped RNAs (m7GpppG-capped RNA) but is required to stabilize the movement of the N-terminal loop of NCBP2/CBP20 and lock the CBC into a high affinity cap-binding state with the cap structure. Associates with NCBP3 to form an alternative cap-binding complex (CBC) which plays a key role in mRNA export. The conventional CBC with NCBP2 binds both small nuclear RNA (snRNA) and messenger (mRNA) and is involved in their export from the nucleus whereas the alternative CBC with NCBP3 does not bind snRNA and associates only with mRNA thereby playing a role only in mRNA export. The protein is Nuclear cap-binding protein subunit 1-B (ncbp1-b) of Xenopus laevis (African clawed frog).